The primary structure comprises 260 residues: MIEQPAACRIHVEALGPTFEAQAEQWAQRLNLPLQVADGEFALQVGEQGLQLQQLGPDAPGPVRVDFVEGGAAHRRLYGGGSGQMIAKAVGIAQGVRPRVLDATAGLGKDAFVLASLGCEMSLIERQPLIGALLEDGLARAAEDFDVAPIVARMKLLKGNSIEVMRNWEGEPPQVIYLDPMFPHREKTALVKKEMRLFRPLVGDDPDAPALLEAALALATHRVVVKRPRKAPCIEGPKPSHALDGKSSRYDIYPKKALKA.

S-adenosyl-L-methionine is bound by residues 125-126 and Asp-179; that span reads ER.

The protein belongs to the methyltransferase superfamily. RsmJ family.

Its subcellular location is the cytoplasm. The catalysed reaction is guanosine(1516) in 16S rRNA + S-adenosyl-L-methionine = N(2)-methylguanosine(1516) in 16S rRNA + S-adenosyl-L-homocysteine + H(+). In terms of biological role, specifically methylates the guanosine in position 1516 of 16S rRNA. The sequence is that of Ribosomal RNA small subunit methyltransferase J from Pseudomonas fluorescens (strain Pf0-1).